We begin with the raw amino-acid sequence, 318 residues long: Protein-L-histidine N-pros-methyltransferase (318 aa).

A signal peptide spans 1–18; sequence MRLLAGWLCLSLASVWLA. Residue Asn-35 is glycosylated (N-linked (GlcNAc...) asparagine). The S-adenosyl-L-homocysteine site is built by Glu-174, Asn-210, and Tyr-295.

Belongs to the METTL9 family. As to expression, expressed in liver, colon, small intestine, skin, kidney and to a lesser extent in spleen, lung, thymus and stomach. Not detected in fibroblast and endothelial cells.

The protein resides in the endoplasmic reticulum. Its subcellular location is the mitochondrion. It carries out the reaction L-histidyl-[protein] + S-adenosyl-L-methionine = N(pros)-methyl-L-histidyl-[protein] + S-adenosyl-L-homocysteine + H(+). Protein-histidine N-methyltransferase that specifically catalyzes 1-methylhistidine (pros-methylhistidine) methylation of target proteins. Specifically methylates the second His of proteins with a His-x-His (HxH) motif (where 'x' is preferably a small amino acid), while exploiting the first one as a recognition signature. Catalyzes methylation of target proteins such as S100A9, NDUFB3, SLC39A5, SLC39A7, ARMC6 and DNAJB12; 1-methylhistidine modification may affect the binding of zinc and other metals to its target proteins. Constitutes the main methyltransferase for the 1-methylhistidine modification in cell. The polypeptide is Protein-L-histidine N-pros-methyltransferase (Mus musculus (Mouse)).